The following is a 419-amino-acid chain: NF-kappa-B essential modulator (419 aa).

Residues 1-48 are disordered; the sequence is MSRPPWKSPLCEMVQPSGSPAGDQDMLGEESSLGKPAMLHVPSEQGTP. Residues 1–197 are required for interaction with and ubiquitination by MARCHF2; sequence MSRPPWKSPL…REALEQRHSV (197 aa). Phosphoserine; by IKKB occurs at positions 31 and 43. Residues 44-111 are interaction with CHUK/IKBKB; sequence EQGTPETFQR…DLVVRLSLEK (68 aa). Residues 49 to 353 adopt a coiled-coil conformation; that stretch reads ETFQRCLEEN…KTSCQESARI (305 aa). Ser68 is subject to Phosphoserine. Glycyl lysine isopeptide (Lys-Gly) (interchain with G-Cter in ubiquitin) cross-links involve residues Lys111, Lys139, Lys143, Lys226, Lys246, and Lys264. The tract at residues 150-257 is interaction with TANK; sequence LGELQESQSR…SMVSSERNRG (108 aa). Residues 242–350 are ubiquitin-binding (UBAN); that stretch reads DNHMKSSMVS…SRLKTSCQES (109 aa). The self-association stretch occupies residues 246-365; the sequence is KSSMVSSERN…MRKRHVEVSQ (120 aa). The required for interaction with TNFAIP3 stretch occupies residues 251–419; the sequence is SSERNRGLQL…LQIHVMECIE (169 aa). Lys277 participates in a covalent cross-link: Glycyl lysine isopeptide (Lys-Gly) (interchain with G-Cter in SUMO); alternate. A Glycyl lysine isopeptide (Lys-Gly) (interchain with G-Cter in ubiquitin); alternate cross-link involves residue Lys277. Glycyl lysine isopeptide (Lys-Gly) (interchain with G-Cter in ubiquitin) cross-links involve residues Lys283, Lys285, Lys292, and Lys302. Residue Lys309 forms a Glycyl lysine isopeptide (Lys-Gly) (interchain with G-Cter in SUMO); alternate linkage. A Glycyl lysine isopeptide (Lys-Gly) (interchain with G-Cter in ubiquitin); alternate cross-link involves residue Lys309. Residues Lys321, Lys325, and Lys326 each participate in a glycyl lysine isopeptide (Lys-Gly) (interchain with G-Cter in ubiquitin) cross-link. Residues 322–343 are leucine-zipper; the sequence is LAEKKEFLQEQLEQLQREYSRL. Positions 356–394 are disordered; that stretch reads MRKRHVEVSQPPLAPGPAHHSFHLNPSSQRRSPPDEPPK. Ser376 carries the phosphoserine; by IKKB modification. The segment at 382-419 is interaction with CYLD; sequence SSQRRSPPDEPPKFCCPKCQYQAPDIDTLQIHVMECIE. Residue Ser387 is modified to Phosphoserine. Residues 389 to 419 form a CCHC NOA-type zinc finger; it reads PDEPPKFCCPKCQYQAPDIDTLQIHVMECIE. Cys397 contacts Zn(2+). A Glycyl lysine isopeptide (Lys-Gly) (interchain with G-Cter in ubiquitin) cross-link involves residue Lys399. Residues Cys400, His413, and Cys417 each coordinate Zn(2+).

In terms of assembly, homodimer; disulfide-linked. Component of the I-kappa-B-kinase (IKK) core complex consisting of CHUK, IKBKB and IKBKG; probably four alpha/CHUK-beta/IKBKB dimers are associated with four gamma/IKBKG subunits. The IKK core complex seems to associate with regulatory or adapter proteins to form a IKK-signalosome holo-complex. The IKK complex associates with TERF2IP/RAP1, leading to promote IKK-mediated phosphorylation of RELA/p65. Part of a complex composed of NCOA2, NCOA3, CHUK/IKKA, IKBKB, IKBKG and CREBBP. Interacts with COPS3, CYLD, NALP2, TRPC4AP and PIDD1. Interacts with ATM; the complex is exported from the nucleus. Interacts with TRAF6. Interacts with IKBKE. Interacts with TANK; the interaction is enhanced by IKBKE and TBK1. Part of a ternary complex consisting of TANK, IKBKB and IKBKG. Interacts with ZFAND5. Interacts with RIPK2. Interacts with TNIP1 and TNFAIP3; TNIP1 facilitates the TNFAIP3-mediated de-ubiquitination of IKBKG. Interacts with TNFAIP3; the interaction is induced by TNF stimulation and by polyubiquitin. Binds (via UBAN region) polyubiquitin; binds both 'Lys-63'-linked and linear polyubiquitin, with higher affinity for linear ubiquitin. Interacts with NLRP10. Interacts with TANK; this interaction increases in response to DNA damage. Interacts with USP10; this interaction increases in response to DNA damage. Interacts with ZC3H12A; this interaction increases in response to DNA damage. Interacts with IFIT5; the interaction synergizes the recruitment of IKK to MAP3K7 and enhances IKK phosphorylation. Interacts with TRIM29; this interaction induces IKBKG/NEMO ubiquitination and proteolytic degradation. Interacts with TRIM13; this interaction leads to IKBKG/NEMO ubiquitination. Interacts with ARFIP2. Interacts with RIPK1. Interacts with (ubiquitinated) BCL10; interaction with polyubiquitinated BCL10 via both 'Lys-63'-linked and linear ubiquitin is required for TCR-induced NF-kappa-B activation. Interacts with MARCHF2; during the late stages of macrophage viral and bacterial infection; the interaction leads to ubiquitination and degradation of IKBKG/NEMO. In terms of processing, phosphorylation at Ser-68 attenuates aminoterminal homodimerization. Polyubiquitinated on Lys-285 through 'Lys-63'; the ubiquitination is mediated downstream of NOD2 and RIPK2 and probably plays a role in signaling by facilitating interactions with ubiquitin domain-containing proteins and activates the NF-kappa-B pathway. Polyubiquitinated on Lys-399 through 'Lys-63'; the ubiquitination is mediated by BCL10, MALT1 and TRAF6 and probably plays a role in signaling by facilitating interactions with ubiquitin domain-containing proteins and activates the NF-kappa-B pathway. Monoubiquitinated on Lys-277 and Lys-309; promotes nuclear export. Polyubiquitinated through 'Lys-27' by TRIM23; involved in antiviral innate and inflammatory responses. Linear polyubiquitinated on Lys-111, Lys-143, Lys-226, Lys-246, Lys-264, Lys-277, Lys-285, Lys-292, Lys-302, Lys-309 and Lys-326; the head-to-tail polyubiquitination is mediated by the LUBAC complex and plays a key role in NF-kappa-B activation. Deubiquitinated by USP10 in a TANK-dependent and -independent manner, leading to the negative regulation of NF-kappa-B signaling upon DNA damage. Ubiquitinated at Lys-326 by MARCHF2 following bacterial and viral infection which leads to its degradation. Polyubiquitinated via 'Lys-29'-linked ubiquitin; leading to lysosomal degradation. Post-translationally, sumoylated on Lys-277 and Lys-309 with SUMO1. In terms of processing, neddylated by TRIM40, resulting in stabilization of NFKBIA and down-regulation of NF-kappa-B activity.

Its subcellular location is the cytoplasm. It localises to the nucleus. In terms of biological role, regulatory subunit of the IKK core complex which phosphorylates inhibitors of NF-kappa-B thus leading to the dissociation of the inhibitor/NF-kappa-B complex and ultimately the degradation of the inhibitor. Its binding to scaffolding polyubiquitin plays a key role in IKK activation by multiple signaling receptor pathways. Can recognize and bind both 'Lys-63'-linked and linear polyubiquitin upon cell stimulation, with a much highr affinity for linear polyubiquitin. Could be implicated in NF-kappa-B-mediated protection from cytokine toxicity. Essential for viral activation of IRF3. Involved in TLR3- and IFIH1-mediated antiviral innate response; this function requires 'Lys-27'-linked polyubiquitination. The sequence is that of NF-kappa-B essential modulator (IKBKG) from Bos taurus (Bovine).